Reading from the N-terminus, the 616-residue chain is Probable galacturonosyltransferase 4 (616 aa).

At 1–6 (MMVKLR) the chain is on the cytoplasmic side. The helical; Signal-anchor for type II membrane protein transmembrane segment at 7-29 (NLVLFFMLLTVVAHILLYTDPAA) threads the bilayer. Over 30–616 (SFKTPFSKRD…VYLRECNINP (587 aa)) the chain is Lumenal. Residues 132–152 (QTSEKVDEQPEPNAFGAKKDT) are disordered. N-linked (GlcNAc...) asparagine glycans are attached at residues Asn-291, Asn-326, Asn-378, Asn-481, and Asn-514.

The protein belongs to the glycosyltransferase 8 family. In terms of tissue distribution, expressed in roots, inflorescences, siliques, leaves and stems.

The protein localises to the golgi apparatus membrane. It participates in glycan metabolism; pectin biosynthesis. Functionally, may be involved in pectin and/or xylans biosynthesis in cell walls. This is Probable galacturonosyltransferase 4 (GAUT4) from Arabidopsis thaliana (Mouse-ear cress).